We begin with the raw amino-acid sequence, 101 residues long: MSAISQERLLQVLLAPQISEKATYVADKNEQVVFKVATSATKPEVKAAVELLFKVEVKSVQISNVKGKSKRFGKMMGRRKDWKKAFVCLKPGQEINFVAGE.

The protein belongs to the universal ribosomal protein uL23 family. As to quaternary structure, part of the 50S ribosomal subunit. Contacts protein L29, and trigger factor when it is bound to the ribosome.

Its function is as follows. One of the early assembly proteins it binds 23S rRNA. One of the proteins that surrounds the polypeptide exit tunnel on the outside of the ribosome. Forms the main docking site for trigger factor binding to the ribosome. The chain is Large ribosomal subunit protein uL23 from Azoarcus sp. (strain BH72).